The following is a 151-amino-acid chain: UPF0098 protein MTH_273 (151 aa).

Belongs to the UPF0098 family.

This is UPF0098 protein MTH_273 from Methanothermobacter thermautotrophicus (strain ATCC 29096 / DSM 1053 / JCM 10044 / NBRC 100330 / Delta H) (Methanobacterium thermoautotrophicum).